Consider the following 814-residue polypeptide: Acyl-coenzyme A dehydrogenase (814 aa).

E497 functions as the Proton acceptor in the catalytic mechanism.

This sequence belongs to the acyl-CoA dehydrogenase family. It depends on FAD as a cofactor.

The enzyme catalyses a medium-chain 2,3-saturated fatty acyl-CoA + oxidized [electron-transfer flavoprotein] + H(+) = a medium-chain (2E)-enoyl-CoA + reduced [electron-transfer flavoprotein]. The catalysed reaction is a long-chain 2,3-saturated fatty acyl-CoA + oxidized [electron-transfer flavoprotein] + H(+) = a long-chain (2E)-enoyl-CoA + reduced [electron-transfer flavoprotein]. It functions in the pathway lipid metabolism; fatty acid beta-oxidation. Catalyzes the dehydrogenation of acyl-coenzymes A (acyl-CoAs) to 2-enoyl-CoAs, the first step of the beta-oxidation cycle of fatty acid degradation. Is required for E.coli to utilize dodecanoate or oleate as the sole carbon and energy source for growth. This is Acyl-coenzyme A dehydrogenase from Escherichia coli (strain K12).